The following is a 360-amino-acid chain: Nucleoporin SEH1 (360 aa).

WD repeat units follow at residues 10-49 (DHKD…DWHC), 55-96 (THSG…SNDK), 111-152 (DSRT…NLSQ), 160-210 (SCKL…RKYA), 217-258 (TVTD…KELT), and 276-315 (NHNS…NWKC). K12 participates in a covalent cross-link: Glycyl lysine isopeptide (Lys-Gly) (interchain with G-Cter in SUMO2). 2 positions are modified to phosphoserine: S179 and S190. Residues 324 to 354 (SPVNGSSQQGTSNPSLGSTIPSLQNSLNGSS) show a composition bias toward polar residues. Residues 324–360 (SPVNGSSQQGTSNPSLGSTIPSLQNSLNGSSAGRKHS) are disordered.

This sequence belongs to the WD repeat SEC13 family. Component of the Nup107-160 subcomplex of the nuclear pore complex (NPC). The Nup107-160 subcomplex includes NUP160, NUP133, NUP107, NUP98, NUP85, NUP43, NUP37, SEH1 and SEC13. The SEH1 subunit appears to be only weakly associated with the Nup107-160 subcomplex. Component of the GATOR2 subcomplex, composed of MIOS, SEC13, SEH1L, WDR24 and WDR59. The GATOR2 complex interacts with CASTOR1 and CASTOR2; the interaction is negatively regulated by arginine. The GATOR2 complex interacts with SESN1, SESN2 and SESN3; the interaction is negatively regulated by amino acids. SESN1, SESN2 and SESN3 convey leucine availability via direct interaction with SEH1L and WDR24.

The protein resides in the chromosome. It is found in the centromere. It localises to the kinetochore. The protein localises to the nucleus. Its subcellular location is the nuclear pore complex. The protein resides in the lysosome membrane. The GATOR2 complex is negatively regulated by the upstream amino acid sensors CASTOR1 and SESN2, which sequester the GATOR2 complex in absence of amino acids. In the presence of abundant amino acids, GATOR2 is released from CASTOR1 and SESN2 and activated. Its function is as follows. Component of the Nup107-160 subcomplex of the nuclear pore complex (NPC). The Nup107-160 subcomplex is required for the assembly of a functional NPC. The Nup107-160 subcomplex is also required for normal kinetochore microtubule attachment, mitotic progression and chromosome segregation. This subunit plays a role in recruitment of the Nup107-160 subcomplex to the kinetochore. Functionally, as a component of the GATOR2 complex, functions as an activator of the amino acid-sensing branch of the mTORC1 signaling pathway. The GATOR2 complex indirectly activates mTORC1 through the inhibition of the GATOR1 subcomplex. GATOR2 probably acts as an E3 ubiquitin-protein ligase toward GATOR1. In the presence of abundant amino acids, the GATOR2 complex mediates ubiquitination of the NPRL2 core component of the GATOR1 complex, leading to GATOR1 inactivation. In the absence of amino acids, GATOR2 is inhibited, activating the GATOR1 complex. Within the GATOR2 complex, SEC13 and SEH1L are required to stabilize the complex. This chain is Nucleoporin SEH1 (SEH1L), found in Homo sapiens (Human).